The chain runs to 236 residues: Phosphoribosylaminoimidazole-succinocarboxamide synthase (236 aa).

The protein belongs to the SAICAR synthetase family.

It carries out the reaction 5-amino-1-(5-phospho-D-ribosyl)imidazole-4-carboxylate + L-aspartate + ATP = (2S)-2-[5-amino-1-(5-phospho-beta-D-ribosyl)imidazole-4-carboxamido]succinate + ADP + phosphate + 2 H(+). It participates in purine metabolism; IMP biosynthesis via de novo pathway; 5-amino-1-(5-phospho-D-ribosyl)imidazole-4-carboxamide from 5-amino-1-(5-phospho-D-ribosyl)imidazole-4-carboxylate: step 1/2. This is Phosphoribosylaminoimidazole-succinocarboxamide synthase from Pseudomonas putida (strain GB-1).